Reading from the N-terminus, the 926-residue chain is DNA mismatch repair protein MutS (926 aa).

Positions 16–40 (VASTPTRRGRPPGSSAARASNGAGS) are disordered. A compositionally biased stretch (low complexity) spans 26–40 (PPGSSAARASNGAGS). ATP is bound at residue 658–665 (GPNMAGKS).

It belongs to the DNA mismatch repair MutS family.

Functionally, this protein is involved in the repair of mismatches in DNA. It is possible that it carries out the mismatch recognition step. This protein has a weak ATPase activity. In Granulibacter bethesdensis (strain ATCC BAA-1260 / CGDNIH1), this protein is DNA mismatch repair protein MutS.